Consider the following 32-residue polypeptide: Growth hormone-related protein 4 (32 aa).

A disulfide bridge connects residues cysteine 4 and cysteine 11.

This sequence belongs to the somatotropin/prolactin family. Post-translationally, glycosylated. As to expression, placental basal zone cells.

The protein resides in the secreted. The polypeptide is Growth hormone-related protein 4 (Rattus norvegicus (Rat)).